Consider the following 140-residue polypeptide: 3-hydroxyacyl-[acyl-carrier-protein] dehydratase FabZ (140 aa).

Residue His47 is part of the active site.

It belongs to the thioester dehydratase family. FabZ subfamily.

It is found in the cytoplasm. The enzyme catalyses a (3R)-hydroxyacyl-[ACP] = a (2E)-enoyl-[ACP] + H2O. Functionally, involved in unsaturated fatty acids biosynthesis. Catalyzes the dehydration of short chain beta-hydroxyacyl-ACPs and long chain saturated and unsaturated beta-hydroxyacyl-ACPs. The protein is 3-hydroxyacyl-[acyl-carrier-protein] dehydratase FabZ of Streptococcus pneumoniae serotype 2 (strain D39 / NCTC 7466).